The chain runs to 261 residues: MKILICNDDGYQASGIVALYEALKTIADVEVVAPEQNNSAKSNALTLHSPMYVQTAANGFRYINGTPADCVHIALTGLLGYRPDLVVSGINNGANMGDDTIYSGTVGAAMEGYLFGIPAIAFSQTEKGWTHIDVAAQQARNLIKQLIPSLEAVAEGAQPSVPPWLLNVNIPNLPAGQVEGFKVCRLGRRHAAERVIVQTSPRGESMYWIGGAGPAKEAGEGTDFHATTQGYVSITPLHVDLTDHERLPYWAQTAARLTHKH.

4 residues coordinate a divalent metal cation: Asp-8, Asp-9, Ser-39, and Asn-91.

Belongs to the SurE nucleotidase family. A divalent metal cation is required as a cofactor.

Its subcellular location is the cytoplasm. The enzyme catalyses a ribonucleoside 5'-phosphate + H2O = a ribonucleoside + phosphate. Functionally, nucleotidase that shows phosphatase activity on nucleoside 5'-monophosphates. The polypeptide is 5'-nucleotidase SurE (Polaromonas naphthalenivorans (strain CJ2)).